A 222-amino-acid polypeptide reads, in one-letter code: Putative hemin import ATP-binding protein HrtA (222 aa).

The ABC transporter domain occupies 3–222 (LVVKDISKTF…QLYDGKIKNS (220 aa)). ATP is bound at residue 39 to 46 (GASGSGKT).

This sequence belongs to the ABC transporter superfamily. HrtA family. As to quaternary structure, the complex is composed of two ATP-binding proteins (HrtA), two transmembrane proteins (HrtB) and a solute-binding protein.

It localises to the cell membrane. Its function is as follows. Part of the ABC transporter complex hrt involved in hemin import. Responsible for energy coupling to the transport system. This Staphylococcus epidermidis (strain ATCC 12228 / FDA PCI 1200) protein is Putative hemin import ATP-binding protein HrtA (hrtA).